A 502-amino-acid chain; its full sequence is Probable cytosol aminopeptidase (502 aa).

2 residues coordinate Mn(2+): Lys269 and Asp274. The active site involves Lys281. Positions 292, 351, and 353 each coordinate Mn(2+). Arg355 is a catalytic residue.

Belongs to the peptidase M17 family. Mn(2+) serves as cofactor.

It localises to the cytoplasm. The catalysed reaction is Release of an N-terminal amino acid, Xaa-|-Yaa-, in which Xaa is preferably Leu, but may be other amino acids including Pro although not Arg or Lys, and Yaa may be Pro. Amino acid amides and methyl esters are also readily hydrolyzed, but rates on arylamides are exceedingly low.. The enzyme catalyses Release of an N-terminal amino acid, preferentially leucine, but not glutamic or aspartic acids.. Its function is as follows. Presumably involved in the processing and regular turnover of intracellular proteins. Catalyzes the removal of unsubstituted N-terminal amino acids from various peptides. The protein is Probable cytosol aminopeptidase of Vibrio campbellii (strain ATCC BAA-1116).